Here is a 289-residue protein sequence, read N- to C-terminus: Thiazole synthase (289 aa).

Lys132 acts as the Schiff-base intermediate with DXP in catalysis. Residues Gly193, 219-220 (AG), and 241-242 (NT) each bind 1-deoxy-D-xylulose 5-phosphate.

It belongs to the ThiG family. In terms of assembly, homotetramer. Forms heterodimers with either ThiH or ThiS.

It localises to the cytoplasm. The enzyme catalyses [ThiS sulfur-carrier protein]-C-terminal-Gly-aminoethanethioate + 2-iminoacetate + 1-deoxy-D-xylulose 5-phosphate = [ThiS sulfur-carrier protein]-C-terminal Gly-Gly + 2-[(2R,5Z)-2-carboxy-4-methylthiazol-5(2H)-ylidene]ethyl phosphate + 2 H2O + H(+). It functions in the pathway cofactor biosynthesis; thiamine diphosphate biosynthesis. Catalyzes the rearrangement of 1-deoxy-D-xylulose 5-phosphate (DXP) to produce the thiazole phosphate moiety of thiamine. Sulfur is provided by the thiocarboxylate moiety of the carrier protein ThiS. In vitro, sulfur can be provided by H(2)S. In Rhodospirillum rubrum (strain ATCC 11170 / ATH 1.1.1 / DSM 467 / LMG 4362 / NCIMB 8255 / S1), this protein is Thiazole synthase.